The chain runs to 564 residues: MAYPGEDYDNDAAYDPYAYSNDYDMHTGDPKQDLAYERQYEQQTYQVIPEVIKNFIQYFHKTVSDLIDQKVYELQASRVSSDVIDQKVYEIQDIYENSWTKLTERFFKNTPWPEAEAIAPQVGNDAVFLILYKELYYRHIYAKVSGGPTLEQRFESYYNYCNLFNYILNADGPAPLELPNQWLWDIIDEFIYQFQSFSQYRCKTAKKSEEEIDFLRSNPKIWNVHSVLNVLHSLVDKSNINRQLEVYTSGGDPESVAGEYGRHSLYKMLGYFSLVGLLRLHSLLGDYYQAIKVLENIELNKKSMYSRVPECQVTTYYYVGFAYLMMRRYQDAIRVFANILLYIQRTKSMFQRTTYKYEMINKQNEQMHALLAIALTMYPMRIDESIHLQLREKYGDKMLRMQKGDAQVYEELFSYACPKFLSPVVPNYDNVHPNYHKEPFLQQLKVFADEVQQQAQLSTIRSFLKLYTTMPVAKLAGFLDLTEQEFRIQLLVFKHKMKNLVWTSGISALDGEFQSASEVDFYIDKDMIHIADTKVARRYGDFFIRQIHKFEELNRTLKKMGQRP.

Residues 331–537 enclose the PCI domain; sequence DAIRVFANIL…IHIADTKVAR (207 aa).

Belongs to the eIF-3 subunit L family. As to quaternary structure, component of the eukaryotic translation initiation factor 3 (eIF-3) complex, which is composed of 13 subunits: EIF3A, EIF3B, EIF3C, EIF3D, EIF3E, EIF3F, EIF3G, EIF3H, EIF3I, EIF3J, EIF3K, EIF3L and EIF3M.

The protein localises to the cytoplasm. In terms of biological role, component of the eukaryotic translation initiation factor 3 (eIF-3) complex, which is involved in protein synthesis of a specialized repertoire of mRNAs and, together with other initiation factors, stimulates binding of mRNA and methionyl-tRNAi to the 40S ribosome. The eIF-3 complex specifically targets and initiates translation of a subset of mRNAs involved in cell proliferation. The protein is Eukaryotic translation initiation factor 3 subunit L of Gallus gallus (Chicken).